The chain runs to 352 residues: UDP-N-acetylglucosamine--N-acetylmuramyl-(pentapeptide) pyrophosphoryl-undecaprenol N-acetylglucosamine transferase (352 aa).

UDP-N-acetyl-alpha-D-glucosamine contacts are provided by S195 and Q287.

The protein belongs to the glycosyltransferase 28 family. MurG subfamily.

It is found in the cell membrane. The enzyme catalyses Mur2Ac(oyl-L-Ala-gamma-D-Glu-L-Lys-D-Ala-D-Ala)-di-trans,octa-cis-undecaprenyl diphosphate + UDP-N-acetyl-alpha-D-glucosamine = beta-D-GlcNAc-(1-&gt;4)-Mur2Ac(oyl-L-Ala-gamma-D-Glu-L-Lys-D-Ala-D-Ala)-di-trans,octa-cis-undecaprenyl diphosphate + UDP + H(+). The protein operates within cell wall biogenesis; peptidoglycan biosynthesis. Its function is as follows. Cell wall formation. Catalyzes the transfer of a GlcNAc subunit on undecaprenyl-pyrophosphoryl-MurNAc-pentapeptide (lipid intermediate I) to form undecaprenyl-pyrophosphoryl-MurNAc-(pentapeptide)GlcNAc (lipid intermediate II). This Streptococcus pneumoniae serotype 19F (strain G54) protein is UDP-N-acetylglucosamine--N-acetylmuramyl-(pentapeptide) pyrophosphoryl-undecaprenol N-acetylglucosamine transferase.